Here is a 545-residue protein sequence, read N- to C-terminus: High-affinity glucose transporter 1 (545 aa).

9 helical membrane passes run 29 to 49 (VFFIASISTIAGMMFGFDISS), 72 to 92 (GFITSSMALGSFFGSIASSFV), 100 to 120 (LSLLTCAFFWMVGAAIQSSVQ), 125 to 145 (LIIGRIISGIGVGFGSAVAPV), 157 to 177 (GLIGGMFQFFVTLGIMIMFYL), 192 to 212 (IAWGLQIVPGLCLFLGCFFIP), 291 to 311 (LTGMNVMMYYIVYIFQMAGYS), 317 to 337 (VASSIQYVINTCVTVPALYFI), and 345 to 365 (LLIGGATMMMAFQFGLAGILG). 2 N-linked (GlcNAc...) asparagine glycosylation sites follow: N376 and N387. The next 2 membrane-spanning stretches (helical) occupy residues 395-415 (IACCYLFVASFAFTWGVGIWV) and 433-453 (ISTSANWILNFAIAMYTPTGF). Residue N455 is glycosylated (N-linked (GlcNAc...) asparagine). Residues 460 to 480 (TYIIYGVFCFAMATHVYFGFP) form a helical membrane-spanning segment. The disordered stretch occupies residues 524-545 (VEHEEDKLMNEDSNSESRENQA).

It belongs to the major facilitator superfamily. Sugar transporter (TC 2.A.1.1) family. As to quaternary structure, interacts with the human complement factors FH and C4BP. Also binds human immunodeficiency virus (HIV) protein gp160.

The protein localises to the cell membrane. In terms of biological role, high-affinity glucose transporter. Acts as a multifunctional complement-evasion molecule that causes down-regulation of complement activation by acquisition of human complement factors FH and C4BP. Also functions as a human immunodeficiency virus (HIV) receptor via binding the viral gp160 protein. Modulates hyphae formation. The chain is High-affinity glucose transporter 1 from Candida albicans (strain SC5314 / ATCC MYA-2876) (Yeast).